The sequence spans 479 residues: Serine--tRNA ligase, mitochondrial (479 aa).

A mitochondrion-targeting transit peptide spans 1–42 (MRLTNRRFSTFLGNALPSKKKGFIFMSQLLYLRTFSTHTSYL). Residue 287-289 (TAE) participates in L-serine binding. 317 to 319 (RRE) is an ATP binding site. L-serine is bound at residue glutamate 340. 404–407 (EITS) provides a ligand contact to ATP. Threonine 438 contributes to the L-serine binding site.

The protein belongs to the class-II aminoacyl-tRNA synthetase family. Type-1 seryl-tRNA synthetase subfamily. Homodimer. The tRNA molecule probably binds across the dimer.

Its subcellular location is the mitochondrion matrix. The enzyme catalyses tRNA(Ser) + L-serine + ATP = L-seryl-tRNA(Ser) + AMP + diphosphate + H(+). In terms of biological role, catalyzes the attachment of serine to tRNA(Ser). Is also probably able to aminoacylate tRNA(Sec) with serine, to form the misacylated tRNA L-seryl-tRNA(Sec), which will be further converted into selenocysteinyl-tRNA(Sec). This chain is Serine--tRNA ligase, mitochondrial (dia4), found in Schizosaccharomyces pombe (strain 972 / ATCC 24843) (Fission yeast).